The sequence spans 376 residues: Flagellar P-ring protein (376 aa).

Residues 1–29 form the signal peptide; it reads MTQRPFSLLSHLGRICLAAAMLAALPAQA.

It belongs to the FlgI family. In terms of assembly, the basal body constitutes a major portion of the flagellar organelle and consists of four rings (L,P,S, and M) mounted on a central rod.

It localises to the periplasm. Its subcellular location is the bacterial flagellum basal body. Functionally, assembles around the rod to form the L-ring and probably protects the motor/basal body from shearing forces during rotation. This Bordetella avium (strain 197N) protein is Flagellar P-ring protein.